We begin with the raw amino-acid sequence, 697 residues long: SPX domain-containing membrane protein At1g63010 (697 aa).

In terms of domain architecture, SPX spans 2 to 145; the sequence is VAFGKYLQRK…GYRFADYYVK (144 aa). Helical transmembrane passes span 247–267, 278–298, 315–335, 337–356, 375–395, and 411–431; these read FNSL…TYII, LGAA…AQVF, LVFS…AYDA, SIAL…ARAV, AGFV…AGLL, and LPGW…CISF. The tract at residues 439-459 is disordered; sequence EDGEKNNRNETTSDRVESSRV. 5 consecutive transmembrane segments (helical) span residues 513–533, 544–564, 576–596, 604–624, and 670–690; these read LLIY…SSVI, SVAI…ILVG, ILLT…NLFV, VISG…NLSL, and LLNA…VATC.

It belongs to the major facilitator superfamily.

It is found in the membrane. In Arabidopsis thaliana (Mouse-ear cress), this protein is SPX domain-containing membrane protein At1g63010.